Consider the following 523-residue polypeptide: 3-hydroxybenzoate--CoA ligase (523 aa).

The protein belongs to the ATP-dependent AMP-binding enzyme family. Benzoate-CoA ligase subfamily.

It carries out the reaction 3-hydroxybenzoate + ATP + CoA = 3-hydroxybenzoyl-CoA + AMP + diphosphate. The enzyme catalyses 4-hydroxybenzoate + ATP + CoA = 4-hydroxybenzoyl-CoA + AMP + diphosphate. Functionally, ligase involved in the anaerobic degradation of 3-hydroxybenzoate (3OHBz). Catalyzes the activation of 3-hydroxybenzoate to 3-hydroxybenzoyl-CoA. Also shows high activity with protocatechuate and 4-hydroxybenzoate. Exhibits lower activity with benzoate, but cannot use 2-hydroxybenzoate or benzoate analogs containing other substituents at the ortho position, such as 2-aminobenzoate (anthranilate). This Aromatoleum sp. (strain CIB) (Azoarcus sp. (strain CIB)) protein is 3-hydroxybenzoate--CoA ligase.